The primary structure comprises 963 residues: Longitudinals lacking protein, isoforms J/P/Q/S/Z (963 aa).

A BTB domain is found at 32–97 (VDCTLAAEGK…MYRGEVNISQ (66 aa)). Disordered regions lie at residues 115 to 200 (LSDN…SSVL), 228 to 340 (SSGP…ASAS), 447 to 469 (DAQQ…RIRV), and 482 to 520 (GKSS…VSTT). Composition is skewed to low complexity over residues 162–175 (SGDV…SSSP), 228–251 (SSGP…LTST), 263–293 (TSST…QTTS), and 329–340 (NSATGPNPASAS). Positions 491-512 (KLTQSKKSLISDAKTTNKTSTP) are enriched in polar residues. The segment at 849–871 (WVCRNCNRTYKWKNSLKCHLKNE) adopts a C2H2-type 1; degenerate zinc-finger fold. The C2H2-type 2; degenerate zinc-finger motif lies at 878–901 (YFCSKMCGYATNVHSNLKRHLNTK). The interval 900-963 (TKCRDREKDA…YTLVFQNDSA (64 aa)) is disordered. Residues 901-915 (KCRDREKDADDEKKP) are compositionally biased toward basic and acidic residues. Residues 937–953 (SSSNNNNNGGGSSTSST) are compositionally biased toward low complexity. Positions 954–963 (YTLVFQNDSA) are enriched in polar residues.

By stage 11, isoform Q, isoform P and isoform Z are expressed throughout the mesoderm. From stage 15, expression of isoform P expands to all tissues, whereas expression of isoform Z and isoform Q becomes restricted during later stages; starting from stage 14 to 16, isoform Z is expressed in muscle, and isoform Q and isoform Z are expressed in the CNS. For some isoforms, expression is also seen in specific types of cells in the embryo; isoform Z is expressed in the ventral furrow at stage 5, and isoform Q is expressed around the tracheal pits at stage 11. Isoform Z also shows transient enrichment in a dorsal cell layer in the CNS at stages 13 and 14.

Its subcellular location is the nucleus. Putative transcription factor required for axon growth and guidance in the central and peripheral nervous systems. Repels CNS axons away from the midline by promoting the expression of the midline repellent sli and its receptor robo. In Drosophila melanogaster (Fruit fly), this protein is Longitudinals lacking protein, isoforms J/P/Q/S/Z.